A 348-amino-acid chain; its full sequence is NADH-cytochrome b5 reductase 2 (348 aa).

The chain crosses the membrane as a helical span at residues 41 to 61 (TLLYGAAAAAVAGAGYYFLGG). Residues 97 to 202 (QGWVSLKLEE…KGPLPKYPWT (106 aa)) enclose the FAD-binding FR-type domain. 205–240 (KHGHIALVAGGTGITPMFQLCRAIFNNPDDQTKVTL) contributes to the FAD binding site.

This sequence belongs to the flavoprotein pyridine nucleotide cytochrome reductase family. It depends on FAD as a cofactor.

The protein resides in the mitochondrion outer membrane. It catalyses the reaction 2 Fe(III)-[cytochrome b5] + NADH = 2 Fe(II)-[cytochrome b5] + NAD(+) + H(+). Functionally, may mediate the reduction of outer membrane cytochrome b5. The chain is NADH-cytochrome b5 reductase 2 (MCR1) from Chaetomium globosum (strain ATCC 6205 / CBS 148.51 / DSM 1962 / NBRC 6347 / NRRL 1970) (Soil fungus).